The chain runs to 526 residues: Type 2 glycosyltransferase (526 aa).

A helical membrane pass occupies residues 25 to 45 (PSFDFWYSSTFWLYLFLGLWF). Residues N298 and N317 are each glycosylated (N-linked (GlcNAc...) asparagine). A run of 3 helical transmembrane segments spans residues 340-360 (FATF…SCWW), 375-395 (WSQF…GLFI), and 403-423 (FLPV…YALI). N-linked (GlcNAc...) asparagine glycosylation is found at N426 and N517.

This sequence belongs to the GT2 glycosyltransferase family.

It localises to the cell membrane. The protein resides in the secreted. Its subcellular location is the cell wall. Glycosyltransferase involved in the maintenance of the outermost surface of the fungal cell wall. Likely functions in the synthesis of a currently unknown, potentially minor but widespread, extracellular or outer cell wall polysaccharide which plays a key role in facilitating many interactions between plants and fungi by enabling hyphal growth on solid matrices. The protein is Type 2 glycosyltransferase of Gibberella zeae (strain ATCC MYA-4620 / CBS 123657 / FGSC 9075 / NRRL 31084 / PH-1) (Wheat head blight fungus).